The following is a 130-amino-acid chain: Capsid protein (130 aa).

Residues 32 to 105 (EWISSNSRSQ…FATNSDCELI (74 aa)) are viral RNA-binding.

Belongs to the Leviviricetes capsid protein family. In terms of assembly, homodimer. The capsid proteins form dimers that assemble by group of 5. Twelve such pentamers are linked together with free dimers. The homodimers binds to the viral RNA via an operator hairpin, but also to many other RNA sequences in the viral genome; this interaction probably shifts the virus from the replicative to the assembly phase and ensures specific encapsidation of the viral genome.

Its subcellular location is the virion. Functionally, capsid protein self-assembles to form an icosahedral capsid with a T=3 symmetry, about 26 nm in diameter, and consisting of 89 capsid proteins dimers (178 capsid proteins). Involved in viral genome encapsidation through the interaction between a capsid protein dimer and the multiple packaging signals present in the RNA genome. The capsid also contains 1 copy of the A2 maturation protein. Its function is as follows. Acts as a translational repressor of viral replicase synthesis late in infection. This latter function is the result of capsid protein interaction with an RNA hairpin which contains the replicase ribosome-binding site. The sequence is that of Capsid protein from Escherichia coli (Bacteriophage MS2).